Here is a 248-residue protein sequence, read N- to C-terminus: UPF0246 protein FN1762 (248 aa).

It belongs to the UPF0246 family.

In Fusobacterium nucleatum subsp. nucleatum (strain ATCC 25586 / DSM 15643 / BCRC 10681 / CIP 101130 / JCM 8532 / KCTC 2640 / LMG 13131 / VPI 4355), this protein is UPF0246 protein FN1762.